The chain runs to 1309 residues: Mediator of RNA polymerase II transcription subunit 33A (1309 aa).

The segment at 809-829 is disordered; it reads QTLNPVNSGTSSSSGAASEDS. Over residues 816–826 the composition is skewed to low complexity; that stretch reads SGTSSSSGAAS.

The protein belongs to the Mediator complex subunit 33 family. As to quaternary structure, component of the Mediator complex.

It localises to the nucleus. Its function is as follows. Component of the Mediator complex, a coactivator involved in the regulated transcription of nearly all RNA polymerase II-dependent genes. Mediator functions as a bridge to convey information from gene-specific regulatory proteins to the basal RNA polymerase II transcription machinery. The Mediator complex, having a compact conformation in its free form, is recruited to promoters by direct interactions with regulatory proteins and serves for the assembly of a functional preinitiation complex with RNA polymerase II and the general transcription factors. Involved in the repression of phenylpropanoid biosynthesis. May compete with MED33B for common binding partners or for occupancy in Mediator. In Arabidopsis thaliana (Mouse-ear cress), this protein is Mediator of RNA polymerase II transcription subunit 33A (MED33A).